Consider the following 392-residue polypeptide: MLRWLTAGESHGPSLVAILEGLPAHVQVTSDDVADALARRRLGYGRGARMKFERDEVTLVGGIRHGETMGGPVAIEIGNTEWPKWEKVMAADPVDPVELESLARNAPLTRPRPGHADLVGMQKYDFTEARPILERASARETAARVALGRVASNLLEQAVGARIVSHVIELGGVRAPAGLWPQPEDVDRLDDDPVRCLDADTSKLMVEAIDQAHQDGDTLGGVVEVVVHGLPPGLGSHVHWDRRLDARLAGALMGIQAIKGVEVGDGFELAATPGSRAHDEIVSGTDGLRRVSGRSGGTEGGMSTGEVLRVRAAMKPIATVPRALRTVDVATGEAAVAHHQRSDVCAVPAAGIVAEAMVALVLADAVLEKFGGDSVRETRRNAEGYLDTLRFR.

NADP(+)-binding residues include arginine 40 and arginine 46. FMN is bound by residues 135 to 137 (RAS), 256 to 257 (QA), glycine 300, 315 to 319 (KPIAT), and arginine 341.

It belongs to the chorismate synthase family. In terms of assembly, homotetramer. Requires FMNH2 as cofactor.

It carries out the reaction 5-O-(1-carboxyvinyl)-3-phosphoshikimate = chorismate + phosphate. It functions in the pathway metabolic intermediate biosynthesis; chorismate biosynthesis; chorismate from D-erythrose 4-phosphate and phosphoenolpyruvate: step 7/7. Functionally, catalyzes the anti-1,4-elimination of the C-3 phosphate and the C-6 proR hydrogen from 5-enolpyruvylshikimate-3-phosphate (EPSP) to yield chorismate, which is the branch point compound that serves as the starting substrate for the three terminal pathways of aromatic amino acid biosynthesis. This reaction introduces a second double bond into the aromatic ring system. The chain is Chorismate synthase from Nocardioides sp. (strain ATCC BAA-499 / JS614).